Here is a 223-residue protein sequence, read N- to C-terminus: Sigma non-opioid intracellular receptor 1 (223 aa).

Over 1-9 the chain is Lumenal; sequence MQWALGRRW. A targeting to endoplasmic reticulum-associated lipid droplets region spans residues 2-8; that stretch reads QWALGRR. The helical transmembrane segment at 10–30 threads the bilayer; sequence VWAALLLAAAAVLTQVVWLWL. The Cytoplasmic portion of the chain corresponds to 31–223; it reads GTQSFVFQHE…FTTYLFGQDS (193 aa). The tract at residues 99–106 is important for ligand-binding; it reads SLSEYVLL. A C-terminal hydrophobic region region spans residues 177–223; it reads VIPSTLAFALADTIFSTQDFLTLFYTLRAYARGLRLEFTTYLFGQDS.

It belongs to the ERG2 family. In terms of assembly, homotrimer. Forms a ternary complex with ANK2 and ITPR3. The complex is disrupted by agonists. Interacts with KCNA4. Interacts with KCNA2; cocaine consumption leads to increased interaction. Interacts with RNF112 in an oxidative stress-regulated manner.

It localises to the nucleus inner membrane. The protein localises to the nucleus outer membrane. Its subcellular location is the nucleus envelope. The protein resides in the cytoplasmic vesicle. It is found in the endoplasmic reticulum membrane. It localises to the membrane. The protein localises to the lipid droplet. Its subcellular location is the cell junction. The protein resides in the cell membrane. It is found in the cell projection. It localises to the growth cone. The protein localises to the postsynaptic density membrane. Functions in lipid transport from the endoplasmic reticulum and is involved in a wide array of cellular functions probably through regulation of the biogenesis of lipid microdomains at the plasma membrane. Involved in the regulation of different receptors it plays a role in BDNF signaling and EGF signaling. Also regulates ion channels like the potassium channel and could modulate neurotransmitter release. Plays a role in calcium signaling through modulation together with ANK2 of the ITP3R-dependent calcium efflux at the endoplasmic reticulum. Plays a role in several other cell functions including proliferation, survival and death. Originally identified for its ability to bind various psychoactive drugs it is involved in learning processes, memory and mood alteration. Necessary for proper mitochondrial axonal transport in motor neurons, in particular the retrograde movement of mitochondria. Plays a role in protecting cells against oxidative stress-induced cell death via its interaction with RNF112. In Mustela erminea (Ermine), this protein is Sigma non-opioid intracellular receptor 1 (SIGMAR1).